A 279-amino-acid chain; its full sequence is DegV domain-containing protein spr1019 (279 aa).

Residues 4-277 (IKIVTDSSVT…ENAWAILIRY (274 aa)) form the DegV domain. Residues Thr62 and Ser94 each contribute to the hexadecanoate site.

Its function is as follows. May bind long-chain fatty acids, such as palmitate, and may play a role in lipid transport or fatty acid metabolism. This is DegV domain-containing protein spr1019 from Streptococcus pneumoniae (strain ATCC BAA-255 / R6).